The sequence spans 197 residues: Small ribosomal subunit protein uS4y (197 aa).

Residues 109–183 (RRLQTIVFKS…VKRRNERAGA (75 aa)) enclose the S4 RNA-binding domain. The segment at 161–197 (SLTSPFGGGRPGRVKRRNERAGAKKASGGDGDEDDEE) is disordered.

Belongs to the universal ribosomal protein uS4 family. Binds to the translation initiation factors TIF3E1.

This Arabidopsis thaliana (Mouse-ear cress) protein is Small ribosomal subunit protein uS4y (RPS9C).